Reading from the N-terminus, the 97-residue chain is MKLRPLHDRVVIRRSEEETKTAGGIVLPGSAAEKPNRGEVVAVGTGRVLDNGEVRAPAVKVGDKVVFGPYSGSNTVKVDGEDLLVMSENEILAVIEA.

The protein belongs to the GroES chaperonin family. As to quaternary structure, heptamer of 7 subunits arranged in a ring. Interacts with the chaperonin GroEL.

It localises to the cytoplasm. Functionally, together with the chaperonin GroEL, plays an essential role in assisting protein folding. The GroEL-GroES system forms a nano-cage that allows encapsulation of the non-native substrate proteins and provides a physical environment optimized to promote and accelerate protein folding. GroES binds to the apical surface of the GroEL ring, thereby capping the opening of the GroEL channel. The polypeptide is Co-chaperonin GroES (Stutzerimonas stutzeri (strain A1501) (Pseudomonas stutzeri)).